The sequence spans 158 residues: UPF0311 protein CA_C3321 (158 aa).

The protein belongs to the UPF0311 family.

The polypeptide is UPF0311 protein CA_C3321 (Clostridium acetobutylicum (strain ATCC 824 / DSM 792 / JCM 1419 / IAM 19013 / LMG 5710 / NBRC 13948 / NRRL B-527 / VKM B-1787 / 2291 / W)).